The primary structure comprises 65 residues: Small ribosomal subunit protein bS21B (65 aa).

The protein belongs to the bacterial ribosomal protein bS21 family.

The protein is Small ribosomal subunit protein bS21B of Geobacter sulfurreducens (strain ATCC 51573 / DSM 12127 / PCA).